A 29-amino-acid chain; its full sequence is Glucagon (29 aa).

It belongs to the glucagon family.

It localises to the secreted. Glucagon plays a key role in glucose metabolism and homeostasis. Regulates blood glucose by increasing gluconeogenesis and decreasing glycolysis. This chain is Glucagon (gcg), found in Polypterus senegalus (Senegal bichir).